A 717-amino-acid polypeptide reads, in one-letter code: Glycine--tRNA ligase beta subunit (717 aa).

It belongs to the class-II aminoacyl-tRNA synthetase family. Tetramer of two alpha and two beta subunits.

It localises to the cytoplasm. It carries out the reaction tRNA(Gly) + glycine + ATP = glycyl-tRNA(Gly) + AMP + diphosphate. This is Glycine--tRNA ligase beta subunit from Agrobacterium fabrum (strain C58 / ATCC 33970) (Agrobacterium tumefaciens (strain C58)).